The sequence spans 93 residues: Small ribosomal subunit protein uS17 (93 aa).

Belongs to the universal ribosomal protein uS17 family. As to quaternary structure, part of the 30S ribosomal subunit.

In terms of biological role, one of the primary rRNA binding proteins, it binds specifically to the 5'-end of 16S ribosomal RNA. The chain is Small ribosomal subunit protein uS17 from Corynebacterium aurimucosum (strain ATCC 700975 / DSM 44827 / CIP 107346 / CN-1) (Corynebacterium nigricans).